Consider the following 666-residue polypeptide: MNVCCVKIPACVRRFRTCQIGNVAVTDFSSTPLLDTIRTPADLRKLKVEQVRQVADELRLETIDAVSVTGGHFGAGLGVVELTTAIHYIFDTPRDRLIWDVGHQAYPHKILTGRRDRIRTLRTGGGLSGFTKRTESDYDPFGAAHSSTSISASLGMAVARDLSGGNNNVIAVIGDGAMSAGMAYEAMNNAGAMNSRLIVILNDNDMSIAPPVGAMSAYLSRLYSGKTYRSLREAAKQLGKHLPKMIADRAERVEEYSRGFMTNSGTLFEELGFYYVGPIDGHNLDHLLPVLKNVRDMENGPILVHVVTQKGKGYPPAEAAADKYHAVVKFDISTGAQSKSKPNAPSYQNVFGASLVKEAEKDDKIVAITAAMPSGTGVDIFNNAFPERTFDVGIAEQHAVTFAAGLATEGFKPFCAIYSTFLQRGYDQVVHDVAIQSLPVRFAIDRAGLVGADGATHAGSFDNAFLGCLPNMVIMAAADEAELVHMVATQVAINDRPSAVRYPRGEGRGVEMPEVGVPLPIGKGRIVRQGSKIALLSFGTRLAECEKAADELAAHGLSTTIADARFMKPLDVDLALKLAREHDVLITIEEGSIGGFGSHVMQTLMDNGALDGGLVRVRSMILPDEFLDHDTPTAMYARAGLDAKGIVAKVFEALGKDVNTETVKLA.

Residues His-103 and 144 to 146 (AHS) contribute to the thiamine diphosphate site. Asp-175 contacts Mg(2+). Thiamine diphosphate-binding positions include 176–177 (GA), Asn-204, Tyr-314, and Glu-396. Asn-204 serves as a coordination point for Mg(2+).

The protein belongs to the transketolase family. DXPS subfamily. As to quaternary structure, homodimer. It depends on Mg(2+) as a cofactor. The cofactor is thiamine diphosphate.

The enzyme catalyses D-glyceraldehyde 3-phosphate + pyruvate + H(+) = 1-deoxy-D-xylulose 5-phosphate + CO2. It functions in the pathway metabolic intermediate biosynthesis; 1-deoxy-D-xylulose 5-phosphate biosynthesis; 1-deoxy-D-xylulose 5-phosphate from D-glyceraldehyde 3-phosphate and pyruvate: step 1/1. Functionally, catalyzes the acyloin condensation reaction between C atoms 2 and 3 of pyruvate and glyceraldehyde 3-phosphate to yield 1-deoxy-D-xylulose-5-phosphate (DXP). The chain is 1-deoxy-D-xylulose-5-phosphate synthase from Nitrobacter winogradskyi (strain ATCC 25391 / DSM 10237 / CIP 104748 / NCIMB 11846 / Nb-255).